An 859-amino-acid polypeptide reads, in one-letter code: MIITPYLNPRLVKPLKWLAIIILLYFLYFSLFSINKKPGKPRKPPKAVENYTCPFEKADFSNFKDKKLEFHKNNGTDPKILVILDSLFSRHGKSIIQILNSQKFAFKAEAISKNLPVLTSAKRGKYSLIIVENYYKYLNMARWNRQLLDKYCKEYRVPLFSFIASKPNDQLKRIRIKGSSLWMWQNQRINRLTVSPSPIHKISKIGAYRNLTTQESDWILFEISENFESILTGTVKNGYERAVVLRDLGREDGVEKVIFGRNLTDFQIKITFLDALWWAMGDEKLFGLDRFVQVDIDDVFVGAQSTRIVEEDVRHLISAQNHFRNFIENFKFLLGFSGSYFRNGDDFEDRGDEILIENAEKFVWFPHMWRHNHAHEHNFTYLESIMVQNRLFAQNMHLPIDYPYAIAPQHDGVFPVHEQMYEAWKKIWNVTVTATEEYPHLKPATGRKGFIHSGIHVLPRQTCGLYTHTQFFDEYPEGFQKVIKSIQGGDLFFTILLNPISIFMTHQQNYAHDRLALYTFENLFRFLNCWTNIRLKWQSPVESAKMYFEKFPEERIPLWTNPCSDPRHQAILPPSMSCSKKSLPDLLIIGPQKTGSTALASFLALHPNVSQNMEIPGSFEEIQFFSGQNYLKGVEWYMSKFPNETTVIFEKSATYFDNPSAARQAAAMVPHAKLVIILQNPTQRAYSWFQSLFQHLIAHKDPIAMSSESLDVILNSTSSESAKFKIRQRCLSGGRYVHHLDKWLEHFSLQQIQFIDSDELRKEPAKVLSSLSKWLDLPEFPFETHIRFSPSKGFHCRLINGKTECLGESKGRKYSEMSQELRQKLDGIFALDNSALFKFLRKNRLKIPDWLEEAVRIRV.

The Cytoplasmic portion of the chain corresponds to 1–13 (MIITPYLNPRLVK). A helical; Signal-anchor for type II membrane protein membrane pass occupies residues 14–34 (PLKWLAIIILLYFLYFSLFSI). Residues 34 to 575 (INKKPGKPRK…PRHQAILPPS (542 aa)) form a heparan sulfate N-deacetylase 1 region. Over 35–859 (NKKPGKPRKP…WLEEAVRIRV (825 aa)) the chain is Lumenal. N-linked (GlcNAc...) asparagine glycans are attached at residues asparagine 50, asparagine 74, asparagine 210, asparagine 262, asparagine 378, and asparagine 429. Residues 576–859 (MSCSKKSLPD…WLEEAVRIRV (284 aa)) form a heparan sulfate N-sulfotransferase 1 region. The active-site For sulfotransferase activity is lysine 593. Position 593–597 (593–597 (KTGST)) interacts with 3'-phosphoadenylyl sulfate. Residues asparagine 608 and asparagine 643 are each glycosylated (N-linked (GlcNAc...) asparagine). 3'-phosphoadenylyl sulfate is bound at residue serine 687. Residue asparagine 715 is glycosylated (N-linked (GlcNAc...) asparagine). Cysteine 796 and cysteine 805 are disulfide-bonded. 810–814 (KGRKY) contacts 3'-phosphoadenylyl sulfate.

It belongs to the sulfotransferase 1 family. NDST subfamily. Monomer.

It is found in the golgi apparatus membrane. It catalyses the reaction alpha-D-glucosaminyl-[heparan sulfate](n) + 3'-phosphoadenylyl sulfate = N-sulfo-alpha-D-glucosaminyl-[heparan sulfate](n) + adenosine 3',5'-bisphosphate + 2 H(+). It functions in the pathway glycan metabolism; heparan sulfate biosynthesis. The protein operates within glycan metabolism; heparin biosynthesis. Its function is as follows. Essential bifunctional enzyme that catalyzes both the N-deacetylation and the N-sulfation of glucosamine (GlcNAc) of the glycosaminoglycan in heparan sulfate. Modifies the GlcNAc-GlcA disaccharide repeating sugar backbone to make N-sulfated heparosan, a prerequisite substrate for later modifications in heparin biosynthesis. In Caenorhabditis briggsae, this protein is Bifunctional heparan sulfate N-deacetylase/N-sulfotransferase 1 (hst-1).